Consider the following 342-residue polypeptide: MLYLPDTMSAWPWQRAINPYFNEVKAASNSWFKSFRAFSPASQKAFDKCDFCLLAALAYPRARKEHLRTGCDLMNLFFVIDEYTDVEDANVCRDMVDIVIDALRRPHDPRPEGEVVLGEIARQFWARAIETASPTSQRRFLETFIAYLESVVLQAADRDCDAEHTVQTYLAQRRDNIGSYPSYAVLELALDIPDDIFYHPAMNELSLYATEMLIIDNDLVSYNREQASGDTNNILFVIMRQFNCSLDHAMAWAAAYHSQLEARFMDAFKRMPSWGLEIDSQVEEYCQGIANWPRGNDCWSFESGRYFGDKGREVQKTRCVPLLPKKERDTSLRQQDVVITSL.

A Mg(2+)-binding site is contributed by Asp81. The short motif at 93 to 97 (RDMVD) is the DDXXD motif element. Mg(2+) is bound by residues Asn217, Ser221, and Glu225. The short motif at 217-225 (NDLVSYNRE) is the NSE/DTE motif element. Residues Arg305 and Tyr306 each contribute to the (2E,6E)-farnesyl diphosphate site.

It belongs to the terpene synthase family. Mg(2+) serves as cofactor.

The catalysed reaction is (2E,6E)-farnesyl diphosphate = Delta(6)-protoilludene + diphosphate. Functionally, terpene cyclase that catalyzes the cyclization of farnesyl diphosphate (FPP) to delta(6)-protoilludene. This Postia placenta (strain ATCC 44394 / Madison 698-R) (Brown rot fungus) protein is Delta(6)-protoilludene synthase 8.